Here is a 24-residue protein sequence, read N- to C-terminus: Humanin-like 6 (24 aa).

Belongs to the humanin family. Expressed in skeletal muscle and testis.

The protein localises to the secreted. It localises to the cytoplasm. In terms of biological role, plays a role as a neuroprotective and antiapoptotic factor. The sequence is that of Humanin-like 6 from Homo sapiens (Human).